Here is a 142-residue protein sequence, read N- to C-terminus: Metallothiol transferase FosB (142 aa).

One can recognise a VOC domain in the interval 5 to 120 (NVNHICFSVS…DGHKIELHTG (116 aa)). His-8, His-67, and Glu-116 together coordinate Mg(2+). Glu-116 acts as the Proton donor/acceptor in catalysis.

This sequence belongs to the fosfomycin resistance protein family. FosB subfamily. In terms of assembly, homodimer. Requires Mg(2+) as cofactor.

The protein resides in the cytoplasm. Its function is as follows. Metallothiol transferase which confers resistance to fosfomycin by catalyzing the addition of a thiol cofactor to fosfomycin. L-cysteine is probably the physiological thiol donor. The chain is Metallothiol transferase FosB from Staphylococcus epidermidis (strain ATCC 35984 / DSM 28319 / BCRC 17069 / CCUG 31568 / BM 3577 / RP62A).